The following is an 880-amino-acid chain: Xylosyltransferase oxt (880 aa).

The Cytoplasmic segment spans residues 1–14 (MEQSVSARWLRRYR). Residues 15 to 35 (PVLIILVLIFGIQLFLAYKSV) form a helical; Signal-anchor for type II membrane protein membrane-spanning segment. Over 36–880 (DIGGGSGSGL…PKSDVDALLK (845 aa)) the chain is Lumenal. Disulfide bonds link cysteine 87–cysteine 115, cysteine 131–cysteine 469, cysteine 488–cysteine 501, and cysteine 490–cysteine 499. N-linked (GlcNAc...) asparagine glycosylation is found at asparagine 135 and asparagine 139. In terms of domain architecture, WSC spans 138–232 (ANVSLGCYRD…FYAMNIYETG (95 aa)). Residues aspartate 287 and 316–318 (TIW) contribute to the UDP-alpha-D-xylose site. N-linked (GlcNAc...) asparagine glycosylation is present at asparagine 346. 419-420 (DW) contacts UDP-alpha-D-xylose. Residues serine 502 and 526–527 (RK) contribute to the UDP-alpha-D-xylose site. Residues asparagine 700 and asparagine 729 are each glycosylated (N-linked (GlcNAc...) asparagine). Cysteine 846 and cysteine 859 are disulfide-bonded.

Belongs to the glycosyltransferase 14 family. XylT subfamily. Requires Ca(2+) as cofactor. Mn(2+) is required as a cofactor. The cofactor is Mg(2+).

The protein localises to the endoplasmic reticulum membrane. It is found in the golgi apparatus membrane. The catalysed reaction is UDP-alpha-D-xylose + L-seryl-[protein] = 3-O-(beta-D-xylosyl)-L-seryl-[protein] + UDP + H(+). Its pathway is glycan metabolism; chondroitin sulfate biosynthesis. It participates in glycan metabolism; heparan sulfate biosynthesis. In terms of biological role, catalyzes the first step in biosynthesis of glycosaminoglycan. Transfers D-xylose from UDP-D-xylose to specific serine residues of the core protein. The polypeptide is Xylosyltransferase oxt (Drosophila pseudoobscura pseudoobscura (Fruit fly)).